The primary structure comprises 160 residues: Transcriptional repressor NrdR (160 aa).

A zinc finger spans residues 3–34; that stretch reads CPRCHHNNSRVIDSRQADDGRAIRRRRECENC. Positions 49 to 139 constitute an ATP-cone domain; the sequence is LLVIKKNGDR…VYRQFKDMSV (91 aa).

This sequence belongs to the NrdR family. Zn(2+) serves as cofactor.

In terms of biological role, negatively regulates transcription of bacterial ribonucleotide reductase nrd genes and operons by binding to NrdR-boxes. The chain is Transcriptional repressor NrdR from Enterococcus faecalis (strain ATCC 700802 / V583).